Consider the following 285-residue polypeptide: Acetylglutamate kinase (285 aa).

Residues 64-65 (GG), Arg86, and Asn179 each bind substrate.

Belongs to the acetylglutamate kinase family. ArgB subfamily.

It localises to the plastid. Its subcellular location is the chloroplast. The enzyme catalyses N-acetyl-L-glutamate + ATP = N-acetyl-L-glutamyl 5-phosphate + ADP. It functions in the pathway amino-acid biosynthesis; L-arginine biosynthesis; N(2)-acetyl-L-ornithine from L-glutamate: step 2/4. Functionally, catalyzes the ATP-dependent phosphorylation of N-acetyl-L-glutamate. The polypeptide is Acetylglutamate kinase (Pyropia yezoensis (Susabi-nori)).